A 636-amino-acid chain; its full sequence is PTS system beta-glucoside-specific EIIBCA component (636 aa).

Residues 1-86 (MKYEQLAKDI…VEIGGFQNQA (86 aa)) enclose the PTS EIIB type-1 domain. Cys-26 acts as the Phosphocysteine intermediate; for EIIB activity in catalysis. 10 helical membrane passes run 104 to 124 (IDIIASIFTPVLGVLAATGMI), 146 to 166 (LLHAIGDSLFYFFPIFLGYTA), 172 to 192 (ATPFIGMAIGASLVYPTLVVL), 215 to 235 (FLGIPVILMSYATSVIPIILA), 258 to 278 (LVPFFTLLIVVPLTFIVIGPI), 299 to 319 (IIAGAFLGGFWQVFVIFGLHW), 337 to 357 (VLAMVFAASFAQIGAVAAVWL), 369 to 389 (VPAFISGIFGVTEPAIYGVTL), 407 to 427 (AIIGLFRSQGYIIGGLGIFGI), and 444 to 464 (IVIAVVVAFVLGFILTYLFGL). The PTS EIIC type-1 domain occupies 105 to 476 (DIIASIFTPV…GNASDEQTET (372 aa)). The tract at residues 472-492 (EQTETKAHTSTGTGEKEEISS) is disordered. A PTS EIIA type-1 domain is found at 506–610 (DEAFSSGALG…AVTTPVIVTN (105 aa)). Catalysis depends on His-558, which acts as the Tele-phosphohistidine intermediate; for EIIA activity.

Its subcellular location is the cell membrane. The phosphoenolpyruvate-dependent sugar phosphotransferase system (sugar PTS), a major carbohydrate active -transport system, catalyzes the phosphorylation of incoming sugar substrates concomitantly with their translocation across the cell membrane. This system is involved in beta-glucoside transport. This chain is PTS system beta-glucoside-specific EIIBCA component (bglP), found in Halalkalibacterium halodurans (strain ATCC BAA-125 / DSM 18197 / FERM 7344 / JCM 9153 / C-125) (Bacillus halodurans).